The sequence spans 489 residues: Pluviatolide synthase (489 aa).

The chain crosses the membrane as a helical span at residues 6–26; the sequence is SVLAMSSTLILALAMALIFLF. Heme is bound at residue Cys432.

The protein belongs to the cytochrome P450 family. The cofactor is heme. In terms of tissue distribution, expressed in leaves, rhizomes and stems.

It localises to the membrane. The catalysed reaction is (-)-matairesinol + reduced [NADPH--hemoprotein reductase] + O2 = (-)-pluviatolide + oxidized [NADPH--hemoprotein reductase] + 2 H2O + H(+). It functions in the pathway aromatic compound metabolism; phenylpropanoid biosynthesis. Cytochrome P450 involved in the biosynthesis of etoposide, a chemotherapeutic compound of the topoisomerase inhibitor family. Catalyzes the conversion of matairesinol to pluviatolide. This is Pluviatolide synthase from Sinopodophyllum hexandrum (Himalayan may apple).